Here is a 392-residue protein sequence, read N- to C-terminus: uncharacterized protein (392 aa).

This sequence belongs to the chlamydial CPn_0675/CT_696/TC_0068 family.

This is an uncharacterized protein from Chlamydia trachomatis serovar D (strain ATCC VR-885 / DSM 19411 / UW-3/Cx).